The primary structure comprises 644 residues: Transcription factor btd (644 aa).

Disordered stretches follow at residues 16-65 and 101-196; these read HQAQ…TQQQ and APPS…AGSP. 2 stretches are compositionally biased toward low complexity: residues 101–119 and 140–196; these read APPSLSGSSSGSSSGSSPL and ASPN…AGSP. 3 consecutive C2H2-type zinc fingers follow at residues 333 to 357, 363 to 385, and 391 to 413; these read HICHIPGCERLYGKASHLKTHLRWH, FLCLTCGKRFSRSDELQRHGRTH, and YACPICSKKFSRSDHLSKHKKTH. Disordered regions lie at residues 437–461 and 478–537; these read LEKKEKKSGKPLTPPVEFKQEQPDT and TSAG…SSSA. 2 stretches are compositionally biased toward low complexity: residues 499–508 and 521–537; these read TTTTSSAAAS and AIQPATTSASSSSSSSA.

The protein localises to the nucleus. In terms of biological role, required for the development of the antennal, intercalary and mandibular segments of the head. In Drosophila melanogaster (Fruit fly), this protein is Transcription factor btd (btd).